The primary structure comprises 174 residues: Crossover junction endodeoxyribonuclease RuvC (174 aa).

Active-site residues include aspartate 8, glutamate 67, and aspartate 139. Mg(2+) is bound by residues aspartate 8, glutamate 67, and aspartate 139.

The protein belongs to the RuvC family. Homodimer which binds Holliday junction (HJ) DNA. The HJ becomes 2-fold symmetrical on binding to RuvC with unstacked arms; it has a different conformation from HJ DNA in complex with RuvA. In the full resolvosome a probable DNA-RuvA(4)-RuvB(12)-RuvC(2) complex forms which resolves the HJ. It depends on Mg(2+) as a cofactor.

The protein localises to the cytoplasm. The catalysed reaction is Endonucleolytic cleavage at a junction such as a reciprocal single-stranded crossover between two homologous DNA duplexes (Holliday junction).. Its function is as follows. The RuvA-RuvB-RuvC complex processes Holliday junction (HJ) DNA during genetic recombination and DNA repair. Endonuclease that resolves HJ intermediates. Cleaves cruciform DNA by making single-stranded nicks across the HJ at symmetrical positions within the homologous arms, yielding a 5'-phosphate and a 3'-hydroxyl group; requires a central core of homology in the junction. The consensus cleavage sequence is 5'-(A/T)TT(C/G)-3'. Cleavage occurs on the 3'-side of the TT dinucleotide at the point of strand exchange. HJ branch migration catalyzed by RuvA-RuvB allows RuvC to scan DNA until it finds its consensus sequence, where it cleaves and resolves the cruciform DNA. This chain is Crossover junction endodeoxyribonuclease RuvC, found in Pseudomonas putida (strain GB-1).